A 733-amino-acid polypeptide reads, in one-letter code: Cell division cycle protein 48 homolog AF_1297 (733 aa).

Residues 223-230 (GPPGTGKT) and 496-503 (GPPGTGKT) contribute to the ATP site.

The protein belongs to the AAA ATPase family. CDC48 subfamily.

This chain is Cell division cycle protein 48 homolog AF_1297, found in Archaeoglobus fulgidus (strain ATCC 49558 / DSM 4304 / JCM 9628 / NBRC 100126 / VC-16).